Here is a 120-residue protein sequence, read N- to C-terminus: NADH-quinone oxidoreductase subunit A (120 aa).

Transmembrane regions (helical) follow at residues 10 to 30 (ILVFLGISLFIAVLALTMGWF), 65 to 85 (VAILFIIFDLETAFLFPWAVV), and 89 to 109 (IGWFGFWAMMVFLAILVVGFI).

The protein belongs to the complex I subunit 3 family. As to quaternary structure, NDH-1 is composed of 14 different subunits. Subunits NuoA, H, J, K, L, M, N constitute the membrane sector of the complex.

It is found in the cell inner membrane. The enzyme catalyses a quinone + NADH + 5 H(+)(in) = a quinol + NAD(+) + 4 H(+)(out). Its function is as follows. NDH-1 shuttles electrons from NADH, via FMN and iron-sulfur (Fe-S) centers, to quinones in the respiratory chain. The immediate electron acceptor for the enzyme in this species is believed to be ubiquinone. Couples the redox reaction to proton translocation (for every two electrons transferred, four hydrogen ions are translocated across the cytoplasmic membrane), and thus conserves the redox energy in a proton gradient. The polypeptide is NADH-quinone oxidoreductase subunit A (Coxiella burnetii (strain Dugway 5J108-111)).